A 276-amino-acid chain; its full sequence is Undecaprenyl-diphosphatase 1 (276 aa).

The next 5 helical transmembrane spans lie at 85-105, 108-128, 187-207, 217-237, and 253-273; these read MNVV…EKTI, VLFA…VILW, VATE…TLYE, VDSI…AFAC, and FAWY…SGWI.

This sequence belongs to the UppP family.

It localises to the cell inner membrane. It catalyses the reaction di-trans,octa-cis-undecaprenyl diphosphate + H2O = di-trans,octa-cis-undecaprenyl phosphate + phosphate + H(+). Catalyzes the dephosphorylation of undecaprenyl diphosphate (UPP). Confers resistance to bacitracin. The sequence is that of Undecaprenyl-diphosphatase 1 from Burkholderia thailandensis (strain ATCC 700388 / DSM 13276 / CCUG 48851 / CIP 106301 / E264).